A 485-amino-acid chain; its full sequence is NADH-quinone oxidoreductase subunit N (485 aa).

Helical transmembrane passes span 8–28 (LIALLPLLIVGLTVVVVMLSI), 35–55 (FLNATLSVIGLNAALVSLWFV), 71–91 (GFAMLYTGLVLLASLATCTFA), 105–125 (FYLLVLIAALGGILLANANHL), 127–147 (SLFLGIELISLPLFGLVGYAF), 159–179 (YTILSAAASSFLLFGMALVYA), 203–223 (LLAGFGMMIVGLGFKLSLVPF), 235–255 (PAPVSTFLATASKIAIFGVVM), 271–291 (VVLAIIAFASIIFGNLMALSQ), 297–317 (LLGYSSISHLGYLLVALIALQ), 326–346 (VGGYLAGYLFSSLGAFGVVSL), 373–393 (AAVMTVMMLSLAGIPMTLGFI), 408–430 (WWLVGAVVVGSAIGLYYYLRVAV), and 455–475 (IVVLISALLVLVLGVWPQPLI).

This sequence belongs to the complex I subunit 2 family. In terms of assembly, NDH-1 is composed of 13 different subunits. Subunits NuoA, H, J, K, L, M, N constitute the membrane sector of the complex.

It localises to the cell inner membrane. The enzyme catalyses a quinone + NADH + 5 H(+)(in) = a quinol + NAD(+) + 4 H(+)(out). NDH-1 shuttles electrons from NADH, via FMN and iron-sulfur (Fe-S) centers, to quinones in the respiratory chain. The immediate electron acceptor for the enzyme in this species is believed to be ubiquinone. Couples the redox reaction to proton translocation (for every two electrons transferred, four hydrogen ions are translocated across the cytoplasmic membrane), and thus conserves the redox energy in a proton gradient. The polypeptide is NADH-quinone oxidoreductase subunit N (Shigella boydii serotype 18 (strain CDC 3083-94 / BS512)).